Reading from the N-terminus, the 475-residue chain is Alpha,alpha-trehalose-phosphate synthase [UDP-forming] (475 aa).

The D-glucose 6-phosphate site is built by Tyr-93 and Asp-147. 2 residues coordinate UDP: Arg-285 and Lys-290. Positions 285 and 290 each coordinate UDP-alpha-D-glucose. Residue Arg-323 coordinates D-glucose 6-phosphate. 384-392 serves as a coordination point for UDP-alpha-D-glucose; sequence DGMNLVSYE. 388–392 serves as a coordination point for UDP; that stretch reads LVSYE.

Belongs to the glycosyltransferase 20 family.

The enzyme catalyses D-glucose 6-phosphate + UDP-alpha-D-glucose = alpha,alpha-trehalose 6-phosphate + UDP + H(+). Its pathway is carbohydrate biosynthesis. Its function is as follows. Synthase catalytic subunit of the trehalose synthase complex that catalyzes the production of trehalose from glucose-6-phosphate and UDP-alpha-D-glucose in a two step process. The sequence is that of Alpha,alpha-trehalose-phosphate synthase [UDP-forming] from Pichia angusta (Yeast).